A 629-amino-acid polypeptide reads, in one-letter code: Probable potassium transport system protein Kup 3 (629 aa).

12 consecutive transmembrane segments (helical) span residues 20-40, 61-81, 106-126, 143-163, 171-191, 209-229, 253-273, 291-311, 343-363, 372-392, 400-420, and 425-445; these read LSLS…LYTF, VSLI…HFAL, PFII…GTIT, PSLK…LFAI, IGKA…ILGA, GLSF…GVFL, WFGL…ALVL, FLLP…QAII, IYIG…TIGF, AYGI…FIAL, IITS…FFAA, and FING…MMYI.

This sequence belongs to the HAK/KUP transporter (TC 2.A.72) family.

The protein localises to the cell inner membrane. It carries out the reaction K(+)(in) + H(+)(in) = K(+)(out) + H(+)(out). Functionally, transport of potassium into the cell. Likely operates as a K(+):H(+) symporter. This chain is Probable potassium transport system protein Kup 3, found in Legionella pneumophila subsp. pneumophila (strain Philadelphia 1 / ATCC 33152 / DSM 7513).